The following is an 892-amino-acid chain: Translation initiation factor IF-2 (892 aa).

Disordered stretches follow at residues 144–176 (QQRL…QKTE) and 189–298 (SNSV…SGAH). Residues 207 to 219 (LPRTVRPTPAARP) are compositionally biased toward low complexity. In terms of domain architecture, tr-type G spans 391-560 (PRPPVVTIMG…SIQAEVLELK (170 aa)). Residues 400-407 (GHVDHGKT), 446-450 (DTPGH), and 500-503 (SKID) each bind GTP.

It belongs to the TRAFAC class translation factor GTPase superfamily. Classic translation factor GTPase family. IF-2 subfamily.

It is found in the cytoplasm. Functionally, one of the essential components for the initiation of protein synthesis. Protects formylmethionyl-tRNA from spontaneous hydrolysis and promotes its binding to the 30S ribosomal subunits. Also involved in the hydrolysis of GTP during the formation of the 70S ribosomal complex. This chain is Translation initiation factor IF-2, found in Xylella fastidiosa (strain M12).